The sequence spans 270 residues: MEIHRLNSYTSVDYLCNSSNNVYILLGDTDEFINKRIILLMNNIELYYVYEISVNDEDELYHSFITSNVVCPIKQRINLMLYKEYKKVIGSCVINNEGNIKMYSQPDKLHVYVLCYRCNGDIKTITMIKCHQLLKPEKEIVIDGYQVNDSSFFYTSPNLIKQINMDKSDLFYKNILLRKEINCLIRKQESSNLYCILNKHIVSLSDTDIWKVIISDELFDSSDIEKLVKFDYDRDKFHAFVRAWYSGQLSNCKEENETIKTVYEMIEKRI.

This sequence belongs to the chordopoxvirinae D3 family.

It is found in the virion. Its function is as follows. Late protein which is part of a large complex required for early virion morphogenesis. This complex participates in the formation of virosomes and the incorporation of virosomal contents into nascent immature virions. In Vertebrata (FPV), this protein is 27 kDa core protein.